Here is a 230-residue protein sequence, read N- to C-terminus: ATP synthase subunit a 1 (230 aa).

Helical transmembrane passes span 20–40, 78–98, 112–132, 174–194, and 195–215; these read ATIV…WLIT, FLPF…LTIF, AALA…NVGI, LLVA…MTLF, and GLLV…VYIA.

The protein belongs to the ATPase A chain family. In terms of assembly, F-type ATPases have 2 components, CF(1) - the catalytic core - and CF(0) - the membrane proton channel. CF(1) has five subunits: alpha(3), beta(3), gamma(1), delta(1), epsilon(1). CF(0) has four main subunits: a, b, b' and c.

It localises to the cellular thylakoid membrane. Key component of the proton channel; it plays a direct role in the translocation of protons across the membrane. This Crocosphaera subtropica (strain ATCC 51142 / BH68) (Cyanothece sp. (strain ATCC 51142)) protein is ATP synthase subunit a 1.